Here is a 321-residue protein sequence, read N- to C-terminus: Ubiquitin-conjugating enzyme E2 U (321 aa).

The UBC core domain occupies 4–153 (RAYLLLHRDF…LRLFNRPLQM (150 aa)). Residue cysteine 89 is the Glycyl thioester intermediate of the active site. Residues 285–321 (WKSDTSLYENDTDEPREEEVEDLISWTNTLNTNTSED) are disordered. The span at 294-306 (NDTDEPREEEVED) shows a compositional bias: acidic residues. The span at 309–321 (SWTNTLNTNTSED) shows a compositional bias: polar residues.

This sequence belongs to the ubiquitin-conjugating enzyme family. Autoubiquitinated in vitro in the presence of UBR5.

The catalysed reaction is S-ubiquitinyl-[E1 ubiquitin-activating enzyme]-L-cysteine + [E2 ubiquitin-conjugating enzyme]-L-cysteine = [E1 ubiquitin-activating enzyme]-L-cysteine + S-ubiquitinyl-[E2 ubiquitin-conjugating enzyme]-L-cysteine.. Its pathway is protein modification; protein ubiquitination. In terms of biological role, catalyzes the covalent attachment of ubiquitin to other proteins. The polypeptide is Ubiquitin-conjugating enzyme E2 U (UBE2U) (Homo sapiens (Human)).